The chain runs to 180 residues: dCTP deaminase (180 aa).

DCTP is bound by residues 101–106 and aspartate 117; that span reads KSSFAR. Glutamate 127 acts as the Proton donor/acceptor in catalysis. Residues tyrosine 159 and glutamine 168 each contribute to the dCTP site.

Belongs to the dCTP deaminase family. As to quaternary structure, homotrimer.

It catalyses the reaction dCTP + H2O + H(+) = dUTP + NH4(+). It participates in pyrimidine metabolism; dUMP biosynthesis; dUMP from dCTP (dUTP route): step 1/2. Catalyzes the deamination of dCTP to dUTP. The polypeptide is dCTP deaminase (Ignicoccus hospitalis (strain KIN4/I / DSM 18386 / JCM 14125)).